The primary structure comprises 261 residues: Histone H1-I (261 aa).

Low complexity predominate over residues 1–22 (MSETEAAPVVAPAAEAAPAAEA). Disordered stretches follow at residues 1–63 (MSET…PPYI) and 125–261 (FKLS…KGKK). Positions 41–50 (APKEPKAPKE) are enriched in basic and acidic residues. The region spanning 58-129 (THPPYIEMVK…KVKGSFKLSE (72 aa)) is the H15 domain. Positions 133–142 (AKAKKSTPKK) are enriched in basic residues. 2 repeat units span residues 136–140 (KKSTP) and 188–192 (KKATP). The 7 X 5 AA repeats of K-K-[AS]-T-P stretch occupies residues 136–250 (KKSTPKKAKA…KKAPAKKSTP (115 aa)). A DNA-binding region spans residues 139–142 (TPKK). A compositionally biased stretch (basic and acidic residues) spans 143–198 (AKADGEAKPKKSEAKPKKAEAVKKTKAPKEKVERPKKEKKEKVEKKKATPKAEKPK). Residues 199–203 (KAATP) form a 3; approximate repeat. 4 tandem repeats follow at residues 209 to 213 (KKATP), 230 to 234 (KKATP), 236 to 240 (KKAAP), and 246 to 250 (KKSTP). Residues 227-250 (AKPKKATPSKKAAPKKAPAKKSTP) show a composition bias toward basic residues. The span at 251–261 (KAKEAKSKGKK) shows a compositional bias: basic and acidic residues.

Belongs to the histone H1/H5 family.

Its subcellular location is the nucleus. The protein localises to the chromosome. Functionally, histones H1 are necessary for the condensation of nucleosome chains into higher-order structures. This is Histone H1-I (H1-I) from Volvox carteri (Green alga).